Here is a 701-residue protein sequence, read N- to C-terminus: MARTTPISRYRNIGISAHIDAGKTTTSERILFYTGVSHKLGEVHDGAATMDWMEQEQERGITITSAATTAFWSGMSKQFEQHRINVIDTPGHVDFTIEVERSMRVLDGAVMVYCAVGGVQPQSETVWRQANKYQVPRIAFVNKMDRTGANFLRVVDQIKTRLGGNSVALQLPIGSEDNFKGVVDLIKMKAINWNEADQGMTFTYEDIPADMLEACEERRAMLVEAAAEASEELMEKFFSGEELTEEEIKTALRQRVLANEIIPVCCGSAFKNKGVQAMLDAVIEYLPAPTDIPAIKGINEDETEGERHASDDEPFAALAFKIATDPFVGNLTFFRVYSGVINSGDTVYNSVKQKRERFGRIVQMHANKREEIKEVRAGDIAAAIGLKDVGTGDTLCAQDAPIILERMEFPEPVISVAVEPKTKADQEKMGLALGRLAQEDPSFRVHTDEESGETIISGMGELHLDIIVDRMRREFKVEANIGKPQVSYRETIRTTVKDVEGKHAKQSGGRGQYGHVVIDLYPLEPEGPGYEFVNEIKGGVIPGEFIPAVDKGIQEQLKSGPLAGYPVVDVGVRLHFGSYHDVDSSELAFKLAASLAFKSAFGRANPVLLEPIMKVEVETPPDYVGDVIGDLSRRRAMVNGQEANEFVVKINAEVPLSEMFGYATDLRSQTQGRASYSMEPLKYAEAPTSVANAIIEARKAK.

Residues 8–290 enclose the tr-type G domain; it reads SRYRNIGISA…AVIEYLPAPT (283 aa). Residues 17-24, 88-92, and 142-145 contribute to the GTP site; these read AHIDAGKT, DTPGH, and NKMD.

The protein belongs to the TRAFAC class translation factor GTPase superfamily. Classic translation factor GTPase family. EF-G/EF-2 subfamily.

The protein resides in the cytoplasm. Functionally, catalyzes the GTP-dependent ribosomal translocation step during translation elongation. During this step, the ribosome changes from the pre-translocational (PRE) to the post-translocational (POST) state as the newly formed A-site-bound peptidyl-tRNA and P-site-bound deacylated tRNA move to the P and E sites, respectively. Catalyzes the coordinated movement of the two tRNA molecules, the mRNA and conformational changes in the ribosome. The polypeptide is Elongation factor G (Actinobacillus pleuropneumoniae serotype 5b (strain L20)).